The primary structure comprises 313 residues: Aspartate carbamoyltransferase catalytic subunit (313 aa).

Carbamoyl phosphate is bound by residues R58 and T59. K86 contributes to the L-aspartate binding site. Residues R108, H136, and Q139 each contribute to the carbamoyl phosphate site. L-aspartate is bound by residues R169 and R223. Residues G265 and P266 each contribute to the carbamoyl phosphate site.

The protein belongs to the aspartate/ornithine carbamoyltransferase superfamily. ATCase family. In terms of assembly, heterododecamer (2C3:3R2) of six catalytic PyrB chains organized as two trimers (C3), and six regulatory PyrI chains organized as three dimers (R2).

It carries out the reaction carbamoyl phosphate + L-aspartate = N-carbamoyl-L-aspartate + phosphate + H(+). The protein operates within pyrimidine metabolism; UMP biosynthesis via de novo pathway; (S)-dihydroorotate from bicarbonate: step 2/3. Its function is as follows. Catalyzes the condensation of carbamoyl phosphate and aspartate to form carbamoyl aspartate and inorganic phosphate, the committed step in the de novo pyrimidine nucleotide biosynthesis pathway. This Anaeromyxobacter dehalogenans (strain 2CP-C) protein is Aspartate carbamoyltransferase catalytic subunit.